Consider the following 2211-residue polypeptide: Activating signal cointegrator 1 complex subunit 3 (2211 aa).

The region spanning 495-678 (ETAYNTNENM…FLHVNPYIGL (184 aa)) is the Helicase ATP-binding 1 domain. 508-515 (APTGAGKT) lines the ATP pocket. The DEVH box motif lies at 620-623 (DEVH). The 207-residue stretch at 717 to 923 (VLKQIMAGHQ…GTVTNVEEAV (207 aa)) folds into the Helicase C-terminal 1 domain. Residues 987–1296 (STDLGRTASH…GAEAVCIINF (310 aa)) enclose the SEC63 1 domain. Residues 1345–1520 (HTLYHTDCNV…WLNINQMGLF (176 aa)) enclose the Helicase ATP-binding 2 domain. Position 1358–1365 (1358–1365 (APTGSGKT)) interacts with ATP. The DEIH box motif lies at 1462-1465 (DEIH). In terms of domain architecture, Helicase C-terminal 2 spans 1553-1760 (PAFQAIRSHS…GTITSKQDAM (208 aa)). The 364-residue stretch at 1821–2184 (PLTYGRIASY…YLGMDQQYDI (364 aa)) folds into the SEC63 2 domain.

It belongs to the helicase family.

Its subcellular location is the nucleus. The protein localises to the nucleus speckle. It localises to the cytoplasm. It is found in the cytosol. It catalyses the reaction Couples ATP hydrolysis with the unwinding of duplex DNA by translocating in the 3'-5' direction.. The enzyme catalyses ATP + H2O = ADP + phosphate + H(+). Functionally, 3'-5' DNA helicase involved in repair of alkylated DNA. Promotes DNA unwinding to generate single-stranded substrate needed for ALKBH3, enabling ALKBH3 to process alkylated N3-methylcytosine (3mC) within double-stranded regions. Also involved in activation of the ribosome quality control (RQC) pathway, a pathway that degrades nascent peptide chains during problematic translation. Drives the splitting of stalled ribosomes. This Gallus gallus (Chicken) protein is Activating signal cointegrator 1 complex subunit 3 (ascc3).